Here is a 348-residue protein sequence, read N- to C-terminus: Histone PARylation factor 1 (348 aa).

Residues 1 to 10 show a composition bias toward basic residues; that stretch reads MAGRGKRKPR. A disordered region spans residues 1 to 38; it reads MAGRGKRKPRSLPQTETPNGEVKKAKEGLKDDKTSVGE. The span at 21 to 38 shows a compositional bias: basic and acidic residues; the sequence is EVKKAKEGLKDDKTSVGE. The stretch at 170–200 forms a coiled coil; the sequence is LQKKKKEKRQQKDDAALNRLEEDLKREAERL. Catalysis depends on glutamate 285, which acts as the Proton donor.

This sequence belongs to the HPF1 family. In terms of assembly, interacts with PARP1 (via the PARP catalytic domain). Interacts with PARP2 (via the PARP catalytic domain). Interacts with core nucleosomes in a parp1- and parp2-dependent manner. As to expression, in adult, mainly expressed in gonads.

It localises to the chromosome. Its subcellular location is the nucleus. Its function is as follows. Cofactor for serine ADP-ribosylation that confers serine specificity on parp1 and parp2 and plays a key role in DNA damage response. Initiates the repair of double-strand DNA breaks: recruited to DNA damage sites by parp1 and parp2 and switches the amino acid specificity of parp1 and parp2 from aspartate or glutamate to serine residues, licensing serine ADP-ribosylation of target proteins. Serine ADP-ribosylation of target proteins, such as histones, promotes decompaction of chromatin and the recruitment of repair factors leading to the reparation of DNA strand breaks. Serine ADP-ribosylation of proteins constitutes the primary form of ADP-ribosylation of proteins in response to DNA damage. Hpf1 acts by completing the active site of parp1 and parp2: forms a composite active site composed of residues from Hpf1 and parp1 or parp2. While hpf1 promotes the initiation of serine ADP-ribosylation, it restricts the polymerase activity of parp1 and parp2 in order to limit the length of poly-ADP-ribose chains. Hpf1 also promotes tyrosine ADP-ribosylation, probably by conferring tyrosine specificity on parp1. This Danio rerio (Zebrafish) protein is Histone PARylation factor 1.